Consider the following 392-residue polypeptide: Leucine aminopeptidase 1 (392 aa).

An N-terminal signal peptide occupies residues 1–18 (MKFSQASLLAACLPAISA). The propeptide occupies 19 to 82 (RFIETAEADN…LGSTRLNAQT (64 aa)). N-linked (GlcNAc...) asparagine glycosylation is present at Asn174. 4 residues coordinate Zn(2+): His182, Asp201, Glu240, and Asp267. A disulfide bridge links Cys316 with Cys320. His349 serves as a coordination point for Zn(2+).

It belongs to the peptidase M28 family. M28E subfamily. As to quaternary structure, monomer. Requires Zn(2+) as cofactor.

The protein resides in the secreted. Functionally, extracellular aminopeptidase that allows assimilation of proteinaceous substrates. The sequence is that of Leucine aminopeptidase 1 (LAP1) from Fusarium vanettenii (strain ATCC MYA-4622 / CBS 123669 / FGSC 9596 / NRRL 45880 / 77-13-4) (Fusarium solani subsp. pisi).